The chain runs to 270 residues: Urease accessory protein UreD (270 aa).

This sequence belongs to the UreD family. As to quaternary structure, ureD, UreF and UreG form a complex that acts as a GTP-hydrolysis-dependent molecular chaperone, activating the urease apoprotein by helping to assemble the nickel containing metallocenter of UreC. The UreE protein probably delivers the nickel.

It localises to the cytoplasm. Its function is as follows. Required for maturation of urease via the functional incorporation of the urease nickel metallocenter. The protein is Urease accessory protein UreD of Synechocystis sp. (strain ATCC 27184 / PCC 6803 / Kazusa).